A 177-amino-acid chain; its full sequence is Actinorhodin polyketide dimerase (177 aa).

To S.pristinaespiralis SnaC.

Its pathway is antibiotic biosynthesis; actinorhodin biosynthesis. This is Actinorhodin polyketide dimerase (actVB) from Streptomyces coelicolor (strain ATCC BAA-471 / A3(2) / M145).